The sequence spans 399 residues: Chorismate synthase (399 aa).

The NADP(+) site is built by arginine 40 and arginine 46. FMN is bound by residues arginine 135–serine 137, glutamine 256–alanine 257, glycine 301, lysine 316–threonine 320, and arginine 342.

It belongs to the chorismate synthase family. In terms of assembly, homotetramer. FMNH2 serves as cofactor.

It catalyses the reaction 5-O-(1-carboxyvinyl)-3-phosphoshikimate = chorismate + phosphate. It functions in the pathway metabolic intermediate biosynthesis; chorismate biosynthesis; chorismate from D-erythrose 4-phosphate and phosphoenolpyruvate: step 7/7. In terms of biological role, catalyzes the anti-1,4-elimination of the C-3 phosphate and the C-6 proR hydrogen from 5-enolpyruvylshikimate-3-phosphate (EPSP) to yield chorismate, which is the branch point compound that serves as the starting substrate for the three terminal pathways of aromatic amino acid biosynthesis. This reaction introduces a second double bond into the aromatic ring system. The polypeptide is Chorismate synthase (Arthrobacter sp. (strain FB24)).